Consider the following 214-residue polypeptide: Putative nickel/cobalt efflux system MJ1092 (214 aa).

6 helical membrane-spanning segments follow: residues 2–22, 46–66, 79–99, 116–136, 149–169, and 188–208; these read VMIMELLYAITAFILGMLHAL, ILLGTTITISHTAVIFLLGIL, VHDMMSVVGGLILIAVGIWII, VITLGLSAGLVPCPAALAVLL, IYVAIFSIGLAISLTGLAVAF, and LPLISGSIIILIGLYTIAHPI.

This sequence belongs to the NiCoT transporter (TC 2.A.52) family.

The protein resides in the cell membrane. Functionally, efflux system for nickel and cobalt. This chain is Putative nickel/cobalt efflux system MJ1092, found in Methanocaldococcus jannaschii (strain ATCC 43067 / DSM 2661 / JAL-1 / JCM 10045 / NBRC 100440) (Methanococcus jannaschii).